Reading from the N-terminus, the 164-residue chain is F-box protein At4g05010 (164 aa).

A disordered region spans residues 38-57; the sequence is SKRAPENDSPPVKRPSHETT. An F-box domain is found at 61–109; sequence RSLLETLHQDILIRVLCHVDHEDLATLKRVSKTIRKAVIEAKKSHFDYS.

In Arabidopsis thaliana (Mouse-ear cress), this protein is F-box protein At4g05010.